A 90-amino-acid chain; its full sequence is Major mite allergen Der p 23 (90 aa).

Positions methionine 1 to alanine 21 are cleaved as a signal peptide. A disordered region spans residues alanine 22–aspartate 42. Positions threonine 30–glutamate 39 are enriched in low complexity. Residues lysine 44–threonine 90 form the Chitin-binding type-2 domain. Intrachain disulfides connect cysteine 47-cysteine 66 and cysteine 76-cysteine 89. The important for IgE-binding stretch occupies residues glycine 52–threonine 90.

Monomer. As to expression, expressed in epithelial cells of the midgut.

It localises to the secreted. The protein localises to the endoplasmic reticulum. It is found in the cytoplasmic vesicle. Functionally, does not bind chitin in vitro. The chain is Major mite allergen Der p 23 from Dermatophagoides pteronyssinus (European house dust mite).